A 180-amino-acid chain; its full sequence is NADH-quinone oxidoreductase subunit I (180 aa).

2 4Fe-4S ferredoxin-type domains span residues 50-80 and 90-119; these read LTRDPDGEERCVACNLCAVACPVGCISLQKA and EFFRINFSRCIFCGLCEEACPTTAIQLTPD. The [4Fe-4S] cluster site is built by Cys-60, Cys-63, Cys-66, Cys-70, Cys-99, Cys-102, Cys-105, and Cys-109.

Belongs to the complex I 23 kDa subunit family. As to quaternary structure, NDH-1 is composed of 13 different subunits. Subunits NuoA, H, J, K, L, M, N constitute the membrane sector of the complex. The cofactor is [4Fe-4S] cluster.

Its subcellular location is the cell inner membrane. The catalysed reaction is a quinone + NADH + 5 H(+)(in) = a quinol + NAD(+) + 4 H(+)(out). Functionally, NDH-1 shuttles electrons from NADH, via FMN and iron-sulfur (Fe-S) centers, to quinones in the respiratory chain. The immediate electron acceptor for the enzyme in this species is believed to be ubiquinone. Couples the redox reaction to proton translocation (for every two electrons transferred, four hydrogen ions are translocated across the cytoplasmic membrane), and thus conserves the redox energy in a proton gradient. In Shigella sonnei (strain Ss046), this protein is NADH-quinone oxidoreductase subunit I.